The sequence spans 443 residues: Phosphoglucosamine mutase (443 aa).

The Phosphoserine intermediate role is filled by serine 103. Serine 103, aspartate 244, aspartate 246, and aspartate 248 together coordinate Mg(2+). Position 103 is a phosphoserine (serine 103).

Belongs to the phosphohexose mutase family. It depends on Mg(2+) as a cofactor. Post-translationally, activated by phosphorylation.

It catalyses the reaction alpha-D-glucosamine 1-phosphate = D-glucosamine 6-phosphate. Catalyzes the conversion of glucosamine-6-phosphate to glucosamine-1-phosphate. The chain is Phosphoglucosamine mutase from Pelagibacter ubique (strain HTCC1062).